The primary structure comprises 443 residues: Glutamyl-tRNA reductase (443 aa).

Substrate-binding positions include 49–52 (TCNR), Ser-109, 114–116 (EQQ), and Gln-120. The Nucleophile role is filled by Cys-50. 189–194 (GAGSMG) contributes to the NADP(+) binding site.

It belongs to the glutamyl-tRNA reductase family. In terms of assembly, homodimer.

The catalysed reaction is (S)-4-amino-5-oxopentanoate + tRNA(Glu) + NADP(+) = L-glutamyl-tRNA(Glu) + NADPH + H(+). Its pathway is porphyrin-containing compound metabolism; protoporphyrin-IX biosynthesis; 5-aminolevulinate from L-glutamyl-tRNA(Glu): step 1/2. Functionally, catalyzes the NADPH-dependent reduction of glutamyl-tRNA(Glu) to glutamate 1-semialdehyde (GSA). This chain is Glutamyl-tRNA reductase, found in Mycobacteroides abscessus (strain ATCC 19977 / DSM 44196 / CCUG 20993 / CIP 104536 / JCM 13569 / NCTC 13031 / TMC 1543 / L948) (Mycobacterium abscessus).